The primary structure comprises 341 residues: DNA-directed RNA polymerase subunit alpha (341 aa).

Positions 1–233 (MVREEVPVST…DLFIPFLHAE (233 aa)) are alpha N-terminal domain (alpha-NTD). An alpha C-terminal domain (alpha-CTD) region spans residues 266 to 341 (IILKRIFIDQ…LKNSNQFESR (76 aa)).

The protein belongs to the RNA polymerase alpha chain family. In terms of assembly, in plastids the minimal PEP RNA polymerase catalytic core is composed of four subunits: alpha, beta, beta', and beta''. When a (nuclear-encoded) sigma factor is associated with the core the holoenzyme is formed, which can initiate transcription.

Its subcellular location is the plastid. The protein localises to the chloroplast. It catalyses the reaction RNA(n) + a ribonucleoside 5'-triphosphate = RNA(n+1) + diphosphate. DNA-dependent RNA polymerase catalyzes the transcription of DNA into RNA using the four ribonucleoside triphosphates as substrates. The polypeptide is DNA-directed RNA polymerase subunit alpha (Nymphaea alba (White water-lily)).